The sequence spans 608 residues: Endo-1,4-beta-xylanase C (608 aa).

The signal sequence occupies residues 1–25; that stretch reads MKTFSVTKSSVVFAMALGMASTAFA. The GH11 1 domain occupies 40-250; the sequence is TITSNQTGKI…VNGEVRGGHM (211 aa). The active-site Nucleophile is E142. The active-site Proton donor is the E237. A compositionally biased stretch (low complexity) spans 263-294; sequence SDPVSSSSVKSSSSTDAPKSSSSKGNGNVSGK. Residues 263 to 296 form a disordered region; the sequence is SDPVSSSSVKSSSSTDAPKSSSSKGNGNVSGKID. The 199-residue stretch at 316 to 514 folds into the GH11 2 domain; sequence NSSVTGNVGS…GSGSFDVTYF (199 aa). E409 serves as the catalytic Nucleophile. E501 serves as the catalytic Proton donor. Positions 520–539 are disordered; that stretch reads AHPLAQPEPESSSSEAKVES. Low complexity predominate over residues 527–539; it reads EPESSSSEAKVES.

The protein belongs to the glycosyl hydrolase 11 (cellulase G) family.

It catalyses the reaction Endohydrolysis of (1-&gt;4)-beta-D-xylosidic linkages in xylans.. Its pathway is glycan degradation; xylan degradation. In terms of biological role, cleaves xylans with the production of xylose, xylobiose and xylo-oligosaccharides. This chain is Endo-1,4-beta-xylanase C (xynC), found in Fibrobacter succinogenes (strain ATCC 19169 / S85).